The sequence spans 598 residues: Probable translation initiation factor IF-2 (598 aa).

Residues 3-225 form the tr-type G domain; it reads LRCPIVSVLG…GLAQKFLEQK (223 aa). The G1 stretch occupies residues 12-19; the sequence is GHVDHGKT. 12–19 is a GTP binding site; sequence GHVDHGKT. The segment at 37–41 is G2; sequence GITQH. Residues 76-79 form a G3 region; that stretch reads DTPG. GTP is bound by residues 76–80 and 130–133; these read DTPGH and NKVD. The G4 stretch occupies residues 130–133; the sequence is NKVD. The interval 200-202 is G5; the sequence is SAM.

The protein belongs to the TRAFAC class translation factor GTPase superfamily. Classic translation factor GTPase family. IF-2 subfamily.

Function in general translation initiation by promoting the binding of the formylmethionine-tRNA to ribosomes. Seems to function along with eIF-2. The polypeptide is Probable translation initiation factor IF-2 (Methanococcus maripaludis (strain C5 / ATCC BAA-1333)).